An 89-amino-acid chain; its full sequence is Large ribosomal subunit protein eL37A (89 aa).

Residues Cys19, Cys22, Cys34, and Cys37 each contribute to the Zn(2+) site. The C4-type zinc-finger motif lies at 19-37 (CRRCGKRSFHIQKSTCACC).

The protein belongs to the eukaryotic ribosomal protein eL37 family. Component of the large ribosomal subunit (LSU). Mature yeast ribosomes consist of a small (40S) and a large (60S) subunit. The 40S small subunit contains 1 molecule of ribosomal RNA (18S rRNA) and at least 33 different proteins. The large 60S subunit contains 3 rRNA molecules (25S, 5.8S and 5S rRNA) and at least 46 different proteins. Zn(2+) serves as cofactor.

It localises to the cytoplasm. In terms of biological role, component of the ribosome, a large ribonucleoprotein complex responsible for the synthesis of proteins in the cell. The small ribosomal subunit (SSU) binds messenger RNAs (mRNAs) and translates the encoded message by selecting cognate aminoacyl-transfer RNA (tRNA) molecules. The large subunit (LSU) contains the ribosomal catalytic site termed the peptidyl transferase center (PTC), which catalyzes the formation of peptide bonds, thereby polymerizing the amino acids delivered by tRNAs into a polypeptide chain. The nascent polypeptides leave the ribosome through a tunnel in the LSU and interact with protein factors that function in enzymatic processing, targeting, and the membrane insertion of nascent chains at the exit of the ribosomal tunnel. This is Large ribosomal subunit protein eL37A (rpl3703) from Schizosaccharomyces pombe (strain 972 / ATCC 24843) (Fission yeast).